We begin with the raw amino-acid sequence, 668 residues long: UvrABC system protein B (668 aa).

Residues 31–188 (HGIEAGEKAQ…RKLVNIQFER (158 aa)) form the Helicase ATP-binding domain. Residue 44–51 (GATGTGKT) participates in ATP binding. The short motif at 97–120 (YYDYYQPEAYVPSSDTYIEKDSSI) is the Beta-hairpin element. The Helicase C-terminal domain occupies 435–601 (QMDDLVGEIN…TIIKPIRDLI (167 aa)). The UVR domain occupies 630-665 (EKLIARLEDEMRAAAKKLDFEQAASLRDTIMDMKTE).

Belongs to the UvrB family. As to quaternary structure, forms a heterotetramer with UvrA during the search for lesions. Interacts with UvrC in an incision complex.

Its subcellular location is the cytoplasm. In terms of biological role, the UvrABC repair system catalyzes the recognition and processing of DNA lesions. A damage recognition complex composed of 2 UvrA and 2 UvrB subunits scans DNA for abnormalities. Upon binding of the UvrA(2)B(2) complex to a putative damaged site, the DNA wraps around one UvrB monomer. DNA wrap is dependent on ATP binding by UvrB and probably causes local melting of the DNA helix, facilitating insertion of UvrB beta-hairpin between the DNA strands. Then UvrB probes one DNA strand for the presence of a lesion. If a lesion is found the UvrA subunits dissociate and the UvrB-DNA preincision complex is formed. This complex is subsequently bound by UvrC and the second UvrB is released. If no lesion is found, the DNA wraps around the other UvrB subunit that will check the other stand for damage. In Levilactobacillus brevis (strain ATCC 367 / BCRC 12310 / CIP 105137 / JCM 1170 / LMG 11437 / NCIMB 947 / NCTC 947) (Lactobacillus brevis), this protein is UvrABC system protein B.